A 155-amino-acid chain; its full sequence is Interferon gamma (155 aa).

The signal sequence occupies residues 1 to 22 (MNATHCILALQLFLMAVSGCYC). N-linked (GlcNAc...) asparagine glycans are attached at residues Asn-38 and Asn-90.

This sequence belongs to the type II (or gamma) interferon family. In terms of assembly, homodimer. Interacts with IFNGR1 (via extracellular domain); this interaction promotes IFNGR1 dimerization. In terms of tissue distribution, released primarily from activated T lymphocytes.

The protein localises to the secreted. Functionally, type II interferon produced by immune cells such as T-cells and NK cells that plays crucial roles in antimicrobial, antiviral, and antitumor responses by activating effector immune cells and enhancing antigen presentation. Primarily signals through the JAK-STAT pathway after interaction with its receptor IFNGR1 to affect gene regulation. Upon IFNG binding, IFNGR1 intracellular domain opens out to allow association of downstream signaling components JAK2, JAK1 and STAT1, leading to STAT1 activation, nuclear translocation and transcription of IFNG-regulated genes. Many of the induced genes are transcription factors such as IRF1 that are able to further drive regulation of a next wave of transcription. Plays a role in class I antigen presentation pathway by inducing a replacement of catalytic proteasome subunits with immunoproteasome subunits. In turn, increases the quantity, quality, and repertoire of peptides for class I MHC loading. Increases the efficiency of peptide generation also by inducing the expression of activator PA28 that associates with the proteasome and alters its proteolytic cleavage preference. Up-regulates as well MHC II complexes on the cell surface by promoting expression of several key molecules such as cathepsins B/CTSB, H/CTSH, and L/CTSL. Participates in the regulation of hematopoietic stem cells during development and under homeostatic conditions by affecting their development, quiescence, and differentiation. This is Interferon gamma (Ifng) from Mus musculus (Mouse).